Consider the following 540-residue polypeptide: Glucose-6-phosphate isomerase (540 aa).

The Proton donor role is filled by E350. Catalysis depends on residues H381 and K503.

Belongs to the GPI family.

Its subcellular location is the cytoplasm. The catalysed reaction is alpha-D-glucose 6-phosphate = beta-D-fructose 6-phosphate. The protein operates within carbohydrate biosynthesis; gluconeogenesis. Its pathway is carbohydrate degradation; glycolysis; D-glyceraldehyde 3-phosphate and glycerone phosphate from D-glucose: step 2/4. Its function is as follows. Catalyzes the reversible isomerization of glucose-6-phosphate to fructose-6-phosphate. This Burkholderia pseudomallei (strain 1710b) protein is Glucose-6-phosphate isomerase.